The following is a 65-amino-acid chain: Crotamine CRO1 (65 aa).

Positions 1 to 22 are cleaved as a signal peptide; the sequence is MKILYLLFAFLFLAFLSEPGNA. 3 disulfides stabilise this stretch: Cys-26–Cys-58, Cys-33–Cys-52, and Cys-40–Cys-59.

This sequence belongs to the crotamine-myotoxin family. Monomer. As to expression, expressed by the venom gland.

It is found in the secreted. Its function is as follows. Cationic peptide that possesses multiple functions. It acts as a cell-penetrating peptide (CPP), and as a potent voltage-gated potassium channel (Kv) inhibitor. It exhibits antimicrobial activities, hind limb paralysis, and severe muscle necrosis by a non-enzymatic mechanism. The polypeptide is Crotamine CRO1 (CRO1) (Crotalus durissus terrificus (South American rattlesnake)).